Consider the following 479-residue polypeptide: Isoprimeverose transporter (479 aa).

11 helical membrane-spanning segments follow: residues 54-74, 102-122, 131-151, 174-194, 205-225, 253-273, 289-309, 321-341, 348-368, 397-417, and 431-451; these read MFFY…LFLV, PYWL…FTVP, VWAY…NIPI, FMGT…VAYF, WFMV…IVFA, WPWV…QTRS, LASF…ITPW, LMGM…SKAL, VGTI…AVML, FGMG…GYVA, and MNYV…LLFY.

It belongs to the sodium:galactoside symporter (TC 2.A.2) family.

Its subcellular location is the cell membrane. Functionally, involved in the metabolism of isoprimeverose. Transports isoprimeverose into the cell. Transport is driven by the proton motive force generated by malolactic fermentation. Cannot transport D-xylose. The sequence is that of Isoprimeverose transporter from Lactiplantibacillus pentosus (Lactobacillus pentosus).